Consider the following 655-residue polypeptide: Archaeal Lon protease (655 aa).

Over 1–123 the chain is Cytoplasmic; it reads MEENIESVEE…KAEREKRDRS (123 aa). 57–64 serves as a coordination point for ATP; that stretch reads GEPGTGKS. The helical transmembrane segment at 124–144 threads the bilayer; that stretch reads RSIMFVIFSVVLLGIIAAIVL. Residue arginine 145 is a topological domain, extracellular. Residues 146–166 form a helical membrane-spanning segment; it reads SITLIFFAIMAAAFLYMAMAF. Over 167–655 the chain is Cytoplasmic; sequence NPVIRNEKAM…ASTRAGQNVA (489 aa). Residues 433 to 618 form the Lon proteolytic domain; the sequence is GSVVGMVNGL…EDVLKVALVN (186 aa). Active-site residues include serine 525 and lysine 568.

Belongs to the peptidase S16 family. Archaeal LonB subfamily. As to quaternary structure, homohexamer. Organized in a ring with a central cavity.

Its subcellular location is the cell membrane. In terms of biological role, ATP-dependent serine protease that mediates the selective degradation of mutant and abnormal proteins as well as certain short-lived regulatory proteins. Degrades polypeptides processively. The protein is Archaeal Lon protease of Thermoplasma volcanium (strain ATCC 51530 / DSM 4299 / JCM 9571 / NBRC 15438 / GSS1).